A 1141-amino-acid chain; its full sequence is MESAFTKEHSWSIISSFFEQKGLVRQQLDSFDQFVKTKMQEVINESPVIIVQSAPTAGIETQKRIAVRFGQIYVSKPPVYTESDGRTITVFPNEARIRDLTYASPLFIDVTKETLSELGVVDKHKYSRVPFGSLPVMLRSSYCVLYGLGDKDLIDLGECPYDQGGYFIVNGSEKVIVAQERMASNTVYVFKKAQPATYTHYAEIRSVPEKSSRNPSTLSMKLCRSPGVIRVSLPLVKQDVPLFVLYRALGFLSDKEIIDHILYEDDEEMFELLKESIEEGTVVQDQNVALDYIGKRSAPIGTPQEKRIVMAKDLLAKEVLPHIGTQEFCETKKAYFIGYIVQRLLLVALGRRNPDDRDHYGKKRMDLSGPLLASLFRTLFKKLCVDTTRHMQKCIENGREFNIALGLKASIITQGFRYALATGNWGDQAKAMQTRAGVAQVLNRYNFVSTLSHLRRVNTPIEKEGKLAAPRQLHNTHWGMVCPAETPEGQACGLVKNLSLMAYISVGSSSGPLVEFLEECGVESLEEISTSQLDAATKIFVNGVWVGIHSDPVGLIKSLKLLRRSLEMDKEVSIVRDIREKEIRVQSDAGRPCRPLLVVKDNKLVITAEDIRKLKRGEIKWDNLVTSGFIEFLDVEEEEMSMIAMNTKILADESRNSSDVSVSYTHCEIHPALILGICASTIPFPDHNQSPRNTYQSAMGKQAMGIYATNFLLRMDTLSNILFYPQKPLVTTKSMEYLRFKELPSGQNALVAIACYSGYNQEDSIIMNQSAIDRGLFRSFFYRTYTDQESMSRPGVNEEFCKPSRGAVLRMKNLNYNKLDDDGLISPGTRVTGDDVLIGKITPILDPERSTKEAPVYVYKDSSTAMRRTETGIVDTVIVTNKDGYKFSKVKVRSGRIPQMGDKFASRHAQKGTIGITLRQEDMPFTSEGIVPDIIINPHAIPSRMTIGHLIECLLGKVSAMSGEEGDATPFSGVTVDGISSRLKSYGFQQRGLEVMYNGMTGRKLRAQMFFGPTYYQRLKHMVDDKIHARARGPLQILTRQPVEGRSRDGGLRFGEMERDCIISHGASAFLKERLMDVSDAYSCYVCDFCGLLAMGGSKVNECKGCNNTTNVSMVEIPYAFKLLIQELMGMNIAPRIRFEE.

Aspartate 763 lines the Mg(2+) pocket. Residues cysteine 1087, cysteine 1090, cysteine 1103, and cysteine 1106 each contribute to the Zn(2+) site. A C4-type zinc finger spans residues 1087 to 1106 (CDFCGLLAMGGSKVNECKGC).

The protein belongs to the RNA polymerase beta chain family. Component of the RNA polymerase II (Pol II) complex consisting of 12 subunits.

The protein localises to the nucleus. It carries out the reaction RNA(n) + a ribonucleoside 5'-triphosphate = RNA(n+1) + diphosphate. DNA-dependent RNA polymerase catalyzes the transcription of DNA into RNA using the four ribonucleoside triphosphates as substrates. Second largest component of RNA polymerase II which synthesizes mRNA precursors and many functional non-coding RNAs. Proposed to contribute to the polymerase catalytic activity and forms the polymerase active center together with the largest subunit. Pol II is the central component of the basal RNA polymerase II transcription machinery. It is composed of mobile elements that move relative to each other. RPB2 is part of the core element with the central large cleft, the clamp element that moves to open and close the cleft and the jaws that are thought to grab the incoming DNA template. This Encephalitozoon cuniculi (strain GB-M1) (Microsporidian parasite) protein is DNA-directed RNA polymerase II subunit RPB2 (RPB2).